The following is a 60-amino-acid chain: L-amino-acid oxidase (60 aa).

1–4 (GPMR) is a binding site for FAD. R4 serves as a coordination point for substrate.

Belongs to the flavin monoamine oxidase family. FIG1 subfamily. In terms of assembly, homodimer; non-covalently linked. It depends on FAD as a cofactor. Contains 2 disulfide bonds. Post-translationally, N-glycosylated. In terms of tissue distribution, expressed by the venom gland.

The protein localises to the secreted. It catalyses the reaction an L-alpha-amino acid + O2 + H2O = a 2-oxocarboxylate + H2O2 + NH4(+). Catalyzes an oxidative deamination of predominantly hydrophobic and aromatic L-amino acids, thus producing hydrogen peroxide that may contribute to the diverse toxic effects of this enzyme. Exhibits diverse biological activities, such as hemorrhage, hemolysis, edema, apoptosis of vascular endothelial cells or tumor cell lines, antibacterial and antiparasitic activities, as well as regulation of platelet aggregation. Effects of snake L-amino oxidases on platelets are controversial, since they either induce aggregation or inhibit agonist-induced aggregation. These different effects are probably due to different experimental conditions. In Bitis gabonica (Gaboon adder), this protein is L-amino-acid oxidase.